A 554-amino-acid polypeptide reads, in one-letter code: Carboxylesterase 1C (554 aa).

The first 18 residues, 1 to 18 (MWLHALVWASLAVCPILG), serve as a signal peptide directing secretion. An N-linked (GlcNAc...) asparagine glycan is attached at Asn79. Cysteines 87 and 116 form a disulfide. The active-site Acyl-ester intermediate is Ser221. Cysteines 273 and 284 form a disulfide. Asn274 and Asn304 each carry an N-linked (GlcNAc...) asparagine glycan. The Charge relay system role is filled by Glu342. Residue Asn377 is glycosylated (N-linked (GlcNAc...) asparagine). His455 serves as the catalytic Charge relay system. A Phosphoserine modification is found at Ser473. N-linked (GlcNAc...) asparagine glycosylation occurs at Asn478. Residues 551–554 (TEHK) carry the Prevents secretion from ER motif.

Belongs to the type-B carboxylesterase/lipase family. In terms of tissue distribution, expressed in lung, kidney and liver.

The protein resides in the endoplasmic reticulum lumen. The catalysed reaction is a carboxylic ester + H2O = an alcohol + a carboxylate + H(+). Its function is as follows. Involved in the detoxification of xenobiotics and in the activation of ester and amide prodrugs. Involved in the extracellular metabolism of lung surfactant. The chain is Carboxylesterase 1C (Ces1c) from Mus musculus (Mouse).